The primary structure comprises 484 residues: MKFIVKLFPEIMMKSKPVRMRFTKMLETNIRNVLKKVDESAKVKREWDKIMVLVPSDRPDLVEAFADRLSCIPGIAHVLQVNESTFESVDDIYQQTLALYKEQLVGKTFCVRVKRVGNHDFKSIEVERYVGGGLNQFTEATGVKLKNPDMTINLEIDRENLYLVVNRIQGLGGYPMATQEDVLSLISGGFDSGVSSYQFIKRGSRTHYCFFNLGGDQHEIGVKQVAYHLWQKYGESHKVKFISVPFDPVVTEILEKIDNGQMGVILKRMMMRTAARLADKMGIQALVTGEAMGQVSSQTLTNLNVIDRCTEQLILRPLIAMDKQDIINLSRKIGTEDFSKSIPEYCGVISQKPTVKAVLSKIEAEEQKFSDDLIERVLETAEIIDIREIATSMDTKITETETVGDVNSNEVIIDVRAPEEEEKDPLKLEGIEIKTIPFFKLATQFADLDKAKTYLLYCDRGVMSKLQALYLQEQGYENVKVYRP.

The region spanning 63-167 (EAFADRLSCI…RENLYLVVNR (105 aa)) is the THUMP domain. ATP contacts are provided by residues 185 to 186 (LI), Lys267, Gly289, and Gln298. A disulfide bridge links Cys346 with Cys458. One can recognise a Rhodanese domain in the interval 406–484 (VNSNEVIIDV…GYENVKVYRP (79 aa)). Cys458 (cysteine persulfide intermediate) is an active-site residue.

Belongs to the ThiI family.

It is found in the cytoplasm. The enzyme catalyses [ThiI sulfur-carrier protein]-S-sulfanyl-L-cysteine + a uridine in tRNA + 2 reduced [2Fe-2S]-[ferredoxin] + ATP + H(+) = [ThiI sulfur-carrier protein]-L-cysteine + a 4-thiouridine in tRNA + 2 oxidized [2Fe-2S]-[ferredoxin] + AMP + diphosphate. The catalysed reaction is [ThiS sulfur-carrier protein]-C-terminal Gly-Gly-AMP + S-sulfanyl-L-cysteinyl-[cysteine desulfurase] + AH2 = [ThiS sulfur-carrier protein]-C-terminal-Gly-aminoethanethioate + L-cysteinyl-[cysteine desulfurase] + A + AMP + 2 H(+). The protein operates within cofactor biosynthesis; thiamine diphosphate biosynthesis. Catalyzes the ATP-dependent transfer of a sulfur to tRNA to produce 4-thiouridine in position 8 of tRNAs, which functions as a near-UV photosensor. Also catalyzes the transfer of sulfur to the sulfur carrier protein ThiS, forming ThiS-thiocarboxylate. This is a step in the synthesis of thiazole, in the thiamine biosynthesis pathway. The sulfur is donated as persulfide by IscS. This is tRNA sulfurtransferase from Shewanella sediminis (strain HAW-EB3).